The primary structure comprises 768 residues: Ral guanine nucleotide dissociation stimulator-like 1 (768 aa).

The N-terminal Ras-GEF domain occupies 65–196 (KIRTIKAGTL…RAQNLLEQFQ (132 aa)). The 270-residue stretch at 232–501 (SEDLVAEQLT…YALSCEIEAA (270 aa)) folds into the Ras-GEF domain. A Phosphoserine modification is found at S520. The interval 530-623 (PGSTPTKEQP…PPTCNNNPKI (94 aa)) is disordered. 2 stretches are compositionally biased toward low complexity: residues 541–561 (SAAS…SCES) and 586–596 (ESSSSCSSIHS). Residues 597-621 (MDTNSSGMSSLINPLSSPPTCNNNP) are compositionally biased toward polar residues. Residues 648–735 (DTCIIRISVE…FDFILRKKNS (88 aa)) enclose the Ras-associating domain.

In terms of assembly, interacts with Ras.

Functionally, probable guanine nucleotide exchange factor. The sequence is that of Ral guanine nucleotide dissociation stimulator-like 1 (Rgl1) from Mus musculus (Mouse).